The chain runs to 77 residues: Acyl carrier protein (77 aa).

Positions 2–77 (SAIDKRVKEI…DAIDYITEHT (76 aa)) constitute a Carrier domain. At Ser-37 the chain carries O-(pantetheine 4'-phosphoryl)serine.

This sequence belongs to the acyl carrier protein (ACP) family. Post-translationally, 4'-phosphopantetheine is transferred from CoA to a specific serine of apo-ACP by AcpS. This modification is essential for activity because fatty acids are bound in thioester linkage to the sulfhydryl of the prosthetic group.

The protein localises to the cytoplasm. Its pathway is lipid metabolism; fatty acid biosynthesis. In terms of biological role, carrier of the growing fatty acid chain in fatty acid biosynthesis. The protein is Acyl carrier protein of Geobacter metallireducens (strain ATCC 53774 / DSM 7210 / GS-15).